A 104-amino-acid chain; its full sequence is Photosystem II reaction center Psb28 protein (104 aa).

It belongs to the Psb28 family. In terms of assembly, part of the photosystem II complex.

The protein resides in the cellular thylakoid membrane. This Synechococcus sp. (strain JA-3-3Ab) (Cyanobacteria bacterium Yellowstone A-Prime) protein is Photosystem II reaction center Psb28 protein.